We begin with the raw amino-acid sequence, 221 residues long: Tetraspanin-2 (221 aa).

The Cytoplasmic portion of the chain corresponds to 1 to 13; that stretch reads MGRFRGGLRCIKY. Residues 14–34 traverse the membrane as a helical segment; sequence LLLGFNLLFWLAGSAVIAFGL. Residues 35 to 54 are Extracellular-facing; sequence WFRFGGTIKDLSSEEKSPEY. A helical transmembrane segment spans residues 55-75; the sequence is FYVGLYVLVGAGALMMAVGFF. Over 76 to 90 the chain is Cytoplasmic; that stretch reads GCCGAMRESQCVLGS. The helical transmembrane segment at 91-111 threads the bilayer; it reads FFTCLLVIFAAEVTTGVFAFI. Topologically, residues 112–188 are extracellular; sequence GKDVAIRHVQ…ETIISVKLQL (77 aa). The N-linked (GlcNAc...) asparagine glycan is linked to asparagine 139. Residues 189–209 traverse the membrane as a helical segment; it reads IGIVGIGIAGLTIFGMIFSMV. Residues 210 to 221 are Cytoplasmic-facing; the sequence is LCCAIRNSRDVI.

It belongs to the tetraspanin (TM4SF) family. Expression is restricted to the nervous system.

It localises to the membrane. Its function is as follows. May play a role in signalling in oligodendrocytes in the early stages of their terminal differentiation into myelin-forming glia and may also function in stabilizing the mature sheath. This chain is Tetraspanin-2 (Tspan2), found in Rattus norvegicus (Rat).